Consider the following 130-residue polypeptide: Small ribosomal subunit protein uS9 (130 aa).

Positions 105–130 are disordered; that stretch reads TRDPRMKERKKYGLHKARKAPQYSKR. Over residues 111 to 130 the composition is skewed to basic residues; the sequence is KERKKYGLHKARKAPQYSKR.

It belongs to the universal ribosomal protein uS9 family.

The polypeptide is Small ribosomal subunit protein uS9 (Syntrophomonas wolfei subsp. wolfei (strain DSM 2245B / Goettingen)).